We begin with the raw amino-acid sequence, 595 residues long: Apolipoprotein N-acyltransferase 2 (595 aa).

5 consecutive transmembrane segments (helical) span residues 30-50 (FLAF…FGFF), 63-83 (LFFH…HWII), 95-115 (VVAI…FPIF), 167-187 (AEIT…YTLF), and 210-230 (FITL…FLFK). One can recognise a CN hydrolase domain in the interval 241-555 (LNVLIVQPDA…AEALSETIDV (315 aa)). The active-site Proton acceptor is glutamate 293. Lysine 372 is an active-site residue. Cysteine 463 (nucleophile) is an active-site residue. A helical transmembrane segment spans residues 569–589 (LIPWLMLFLTGIYYLNLLIGI).

Belongs to the CN hydrolase family. Apolipoprotein N-acyltransferase subfamily.

The protein localises to the cell inner membrane. It catalyses the reaction N-terminal S-1,2-diacyl-sn-glyceryl-L-cysteinyl-[lipoprotein] + a glycerophospholipid = N-acyl-S-1,2-diacyl-sn-glyceryl-L-cysteinyl-[lipoprotein] + a 2-acyl-sn-glycero-3-phospholipid + H(+). Its pathway is protein modification; lipoprotein biosynthesis (N-acyl transfer). Its function is as follows. Catalyzes the phospholipid dependent N-acylation of the N-terminal cysteine of apolipoprotein, the last step in lipoprotein maturation. This chain is Apolipoprotein N-acyltransferase 2, found in Leptospira interrogans serogroup Icterohaemorrhagiae serovar copenhageni (strain Fiocruz L1-130).